Reading from the N-terminus, the 312-residue chain is uncharacterized protein (312 aa).

This is an uncharacterized protein from Mycoplasma (Bacteriophage L2).